The sequence spans 65 residues: DNA gyrase inhibitor YacG (65 aa).

Zn(2+)-binding residues include C9, C12, C28, and C32. The segment at 44–65 (EKRIPSSSDLSESDDWSEEPKQ) is disordered. Positions 54–65 (SESDDWSEEPKQ) are enriched in acidic residues.

Belongs to the DNA gyrase inhibitor YacG family. Interacts with GyrB. It depends on Zn(2+) as a cofactor.

Functionally, inhibits all the catalytic activities of DNA gyrase by preventing its interaction with DNA. Acts by binding directly to the C-terminal domain of GyrB, which probably disrupts DNA binding by the gyrase. This is DNA gyrase inhibitor YacG from Escherichia coli O6:H1 (strain CFT073 / ATCC 700928 / UPEC).